The chain runs to 125 residues: Classical arabinogalactan protein 27 (125 aa).

An N-terminal signal peptide occupies residues 1-21 (MASSILLTLITFIFLSSLSLS). Over residues 20 to 36 (LSSPTTNTIPSSQTISP) the composition is skewed to low complexity. A disordered region spans residues 20–95 (LSSPTTNTIP…ASPPASSLAS (76 aa)). The segment covering 53-66 (AVSSTQTIPSSSTL) has biased composition (polar residues). The segment covering 77-95 (DPDPAFAPSASPPASSLAS) has biased composition (low complexity). Serine 98 carries the GPI-anchor amidated serine lipid modification. Positions 99 to 125 (QAPGVFIYFVFAAVYCFSLRLLAVSAI) are cleaved as a propeptide — removed in mature form.

The protein belongs to the classical AGP family. O-glycosylated on the hydroxyproline residues.

The protein localises to the cell membrane. Proteoglycan that seems to be implicated in diverse developmental roles such as differentiation, cell-cell recognition, embryogenesis and programmed cell death. The chain is Classical arabinogalactan protein 27 (AGP27) from Arabidopsis thaliana (Mouse-ear cress).